Here is a 99-residue protein sequence, read N- to C-terminus: UPF0751 protein BCAH820_B0138 (99 aa).

It belongs to the UPF0751 family.

The chain is UPF0751 protein BCAH820_B0138 from Bacillus cereus (strain AH820).